The chain runs to 227 residues: Ribonuclease 3 (227 aa).

The RNase III domain maps to 4–133; it reads FEKLEKLLSY…LIAAIYLDSN (130 aa). Residue E46 participates in Mg(2+) binding. D50 is an active-site residue. Mg(2+)-binding residues include N119 and E122. E122 is a catalytic residue. A DRBM domain is found at 158–226; the sequence is DPKTALQEWA…ARSLLHRLKN (69 aa).

The protein belongs to the ribonuclease III family. In terms of assembly, homodimer. The cofactor is Mg(2+).

It localises to the cytoplasm. It catalyses the reaction Endonucleolytic cleavage to 5'-phosphomonoester.. Digests double-stranded RNA. Involved in the processing of primary rRNA transcript to yield the immediate precursors to the large and small rRNAs (23S and 16S). Processes some mRNAs, and tRNAs when they are encoded in the rRNA operon. Processes pre-crRNA and tracrRNA of type II CRISPR loci if present in the organism. The chain is Ribonuclease 3 from Rickettsia africae (strain ESF-5).